Here is a 545-residue protein sequence, read N- to C-terminus: CTP synthase (545 aa).

The tract at residues 1-266 (MTTRYIFVTG…DDLVTKRFGL (266 aa)) is amidoligase domain. Serine 14 contacts CTP. Serine 14 is a UTP binding site. ATP is bound by residues 15 to 20 (SLGKGI) and aspartate 72. Residues aspartate 72 and glutamate 140 each contribute to the Mg(2+) site. Residues 147-149 (DIE), 187-192 (KTKPTQ), and lysine 223 contribute to the CTP site. UTP is bound by residues 187-192 (KTKPTQ) and lysine 223. Residue 239 to 241 (KDV) participates in ATP binding. Residues 291-542 (TIGMVGKYTE…VAAAVAYQKR (252 aa)) enclose the Glutamine amidotransferase type-1 domain. An L-glutamine-binding site is contributed by glycine 352. Cysteine 379 functions as the Nucleophile; for glutamine hydrolysis in the catalytic mechanism. L-glutamine is bound by residues 380 to 383 (LGMQ), glutamate 403, and arginine 470. Active-site residues include histidine 515 and glutamate 517.

Belongs to the CTP synthase family. As to quaternary structure, homotetramer.

It catalyses the reaction UTP + L-glutamine + ATP + H2O = CTP + L-glutamate + ADP + phosphate + 2 H(+). The enzyme catalyses L-glutamine + H2O = L-glutamate + NH4(+). It carries out the reaction UTP + NH4(+) + ATP = CTP + ADP + phosphate + 2 H(+). Its pathway is pyrimidine metabolism; CTP biosynthesis via de novo pathway; CTP from UDP: step 2/2. Its activity is regulated as follows. Allosterically activated by GTP, when glutamine is the substrate; GTP has no effect on the reaction when ammonia is the substrate. The allosteric effector GTP functions by stabilizing the protein conformation that binds the tetrahedral intermediate(s) formed during glutamine hydrolysis. Inhibited by the product CTP, via allosteric rather than competitive inhibition. Functionally, catalyzes the ATP-dependent amination of UTP to CTP with either L-glutamine or ammonia as the source of nitrogen. Regulates intracellular CTP levels through interactions with the four ribonucleotide triphosphates. In Shewanella loihica (strain ATCC BAA-1088 / PV-4), this protein is CTP synthase.